The primary structure comprises 399 residues: Elongation factor Tu (399 aa).

The tr-type G domain maps to 10–209 (NPHVNIGTIG…EVDSYIPTPE (200 aa)). Residues 19 to 26 (GHVYHGKT) are G1. 19 to 26 (GHVYHGKT) lines the GTP pocket. Residue Thr26 coordinates Mg(2+). The G2 stretch occupies residues 60 to 64 (GITIA). A G3 region spans residues 81 to 84 (DCPG). GTP-binding positions include 81 to 85 (DCPGH) and 136 to 139 (NKQD). Residues 136–139 (NKQD) form a G4 region. The tract at residues 174 to 176 (SAL) is G5.

This sequence belongs to the TRAFAC class translation factor GTPase superfamily. Classic translation factor GTPase family. EF-Tu/EF-1A subfamily. Monomer.

It localises to the cytoplasm. It carries out the reaction GTP + H2O = GDP + phosphate + H(+). GTP hydrolase that promotes the GTP-dependent binding of aminoacyl-tRNA to the A-site of ribosomes during protein biosynthesis. The sequence is that of Elongation factor Tu from Helicobacter pylori (strain J99 / ATCC 700824) (Campylobacter pylori J99).